The primary structure comprises 225 residues: 7-cyano-7-deazaguanine synthase (225 aa).

10–20 (LSGGIDSATAA) is an ATP binding site. The Zn(2+) site is built by Cys191, Cys199, Cys202, and Cys205.

This sequence belongs to the QueC family. It depends on Zn(2+) as a cofactor.

The catalysed reaction is 7-carboxy-7-deazaguanine + NH4(+) + ATP = 7-cyano-7-deazaguanine + ADP + phosphate + H2O + H(+). It participates in purine metabolism; 7-cyano-7-deazaguanine biosynthesis. Functionally, catalyzes the ATP-dependent conversion of 7-carboxy-7-deazaguanine (CDG) to 7-cyano-7-deazaguanine (preQ(0)). The chain is 7-cyano-7-deazaguanine synthase from Prochlorococcus marinus (strain NATL2A).